We begin with the raw amino-acid sequence, 227 residues long: UPF0173 metal-dependent hydrolase BCB4264_A4722 (227 aa).

It belongs to the UPF0173 family.

The sequence is that of UPF0173 metal-dependent hydrolase BCB4264_A4722 from Bacillus cereus (strain B4264).